The following is a 96-amino-acid chain: ATP synthase subunit c (96 aa).

2 helical membrane-spanning segments follow: residues 28 to 50 (LGAGVAMGIGAIGPGVGEGNIGA) and 75 to 95 (AVTESTGLYSLVVALILLFVL).

It belongs to the ATPase C chain family. In terms of assembly, F-type ATPases have 2 components, F(1) - the catalytic core - and F(0) - the membrane proton channel. F(1) has five subunits: alpha(3), beta(3), gamma(1), delta(1), epsilon(1). F(0) has three main subunits: a(1), b(2) and c(10-14). The alpha and beta chains form an alternating ring which encloses part of the gamma chain. F(1) is attached to F(0) by a central stalk formed by the gamma and epsilon chains, while a peripheral stalk is formed by the delta and b chains.

The protein localises to the cell inner membrane. F(1)F(0) ATP synthase produces ATP from ADP in the presence of a proton or sodium gradient. F-type ATPases consist of two structural domains, F(1) containing the extramembraneous catalytic core and F(0) containing the membrane proton channel, linked together by a central stalk and a peripheral stalk. During catalysis, ATP synthesis in the catalytic domain of F(1) is coupled via a rotary mechanism of the central stalk subunits to proton translocation. Functionally, key component of the F(0) channel; it plays a direct role in translocation across the membrane. A homomeric c-ring of between 10-14 subunits forms the central stalk rotor element with the F(1) delta and epsilon subunits. This chain is ATP synthase subunit c, found in Petrotoga mobilis (strain DSM 10674 / SJ95).